Reading from the N-terminus, the 447-residue chain is N-succinylarginine dihydrolase (447 aa).

Residues 19–28, Asn110, and 137–138 each bind substrate; these read AGLSFGNEAS and HR. Glu174 is an active-site residue. Position 213 (Arg213) interacts with substrate. Residue His249 is part of the active site. Substrate is bound by residues Asp251 and Asn364. Cys370 functions as the Nucleophile in the catalytic mechanism.

This sequence belongs to the succinylarginine dihydrolase family. Homodimer.

The catalysed reaction is N(2)-succinyl-L-arginine + 2 H2O + 2 H(+) = N(2)-succinyl-L-ornithine + 2 NH4(+) + CO2. Its pathway is amino-acid degradation; L-arginine degradation via AST pathway; L-glutamate and succinate from L-arginine: step 2/5. Its function is as follows. Catalyzes the hydrolysis of N(2)-succinylarginine into N(2)-succinylornithine, ammonia and CO(2). The chain is N-succinylarginine dihydrolase from Yersinia pseudotuberculosis serotype O:1b (strain IP 31758).